The primary structure comprises 202 residues: Protein GrpE (202 aa).

The segment covering 21 to 37 (EELKNEEVKEETHEHEH) has biased composition (basic and acidic residues). Residues 21 to 52 (EELKNEEVKEETHEHEHKHGGHTCCGKHGHKH) are disordered. The segment covering 38 to 51 (KHGGHTCCGKHGHK) has biased composition (basic residues).

It belongs to the GrpE family. As to quaternary structure, homodimer.

The protein resides in the cytoplasm. In terms of biological role, participates actively in the response to hyperosmotic and heat shock by preventing the aggregation of stress-denatured proteins, in association with DnaK and GrpE. It is the nucleotide exchange factor for DnaK and may function as a thermosensor. Unfolded proteins bind initially to DnaJ; upon interaction with the DnaJ-bound protein, DnaK hydrolyzes its bound ATP, resulting in the formation of a stable complex. GrpE releases ADP from DnaK; ATP binding to DnaK triggers the release of the substrate protein, thus completing the reaction cycle. Several rounds of ATP-dependent interactions between DnaJ, DnaK and GrpE are required for fully efficient folding. This Fusobacterium nucleatum subsp. polymorphum (Fusobacterium polymorphum) protein is Protein GrpE.